The following is a 256-amino-acid chain: ATG8-interacting protein 1 (256 aa).

An AIM (Atg8-family-interacting motif) motif is present at residues Trp-14 to Val-17. Residues Ala-181–Gly-200 traverse the membrane as a helical segment. Residues Trp-208–Leu-211 carry the AIM (Atg8-family-interacting motif) motif.

Interacts with ATG8F. Interacts with ATG8H. Interacts with APE1 and PSBS/NPQ4.

It is found in the endoplasmic reticulum membrane. The protein resides in the membrane. Its subcellular location is the plastid. It localises to the chloroplast membrane. Its function is as follows. Involved in a special stress-induced plastid-to-vacuole protein trafficking pathway. Interacts with ATG8F in plastid bodies to subsequently enable their delivery to the vacuole by an autophagic pathway. Interacts with the plastid proteins APE1 and PSBS/NPQ4 and may recruit them as cargo into plastid bodies that may be recognized by the autophagy machinery for degradation in the vacuole. Involved in the alleviation of damage caused by salt stress during plant development, probably through its involvement in plastid-to-vacuole and ER-to-vacuole trafficking. Plays a role in seed germination in response to exogenous abscisic acid (ABA) treatment. This is ATG8-interacting protein 1 from Arabidopsis thaliana (Mouse-ear cress).